We begin with the raw amino-acid sequence, 618 residues long: Phostensin (618 aa).

Positions 15–33 (RRQEEAAVRGREKAERERL) are enriched in basic and acidic residues. Positions 15–505 (RRQEEAAVRG…PATADAAVPG (491 aa)) are disordered. Position 54 is a phosphoserine (S54). Positions 96–109 (QQQQQQQQQQQQQQ) are enriched in low complexity. Basic and acidic residues-rich tracts occupy residues 110–160 (RSEE…ERRL) and 173–197 (LESRDWRQSPGEAGDRSSRLSEVRK). Phosphoserine is present on residues S131, S139, S181, and S201. T205 carries the phosphothreonine modification. Residue S231 is modified to Phosphoserine. Basic and acidic residues-rich tracts occupy residues 234 to 245 (DSDHEKLGLTDA) and 271 to 289 (SGEERKDCLEECGRKEERT). Over residues 308–319 (EAAGSSSGGVEA) the composition is skewed to low complexity. The segment covering 348–358 (KVRDRTPRDTE) has biased composition (basic and acidic residues). Positions 429-451 (RPPPAAPLSPPPPAPPAPQPPGD) are enriched in pro residues. Residue S437 is modified to Phosphoserine. Residue K462 is modified to N6-acetyllysine. The span at 485-505 (APPAAAATPATPATADAAVPG) shows a compositional bias: low complexity. A Phosphoserine modification is found at S535. Residues 556–594 (YQYPSESSVLEELGPEPEAPSAPSPPAAQPDDEEDEEEL) form a disordered region. Residues 572–583 (PEAPSAPSPPAA) are compositionally biased toward pro residues. The segment covering 585–594 (PDDEEDEEEL) has biased composition (acidic residues).

Interacts with Protein phosphatase 1 (PP1).

Its subcellular location is the cytoplasm. The protein localises to the cytoskeleton. In terms of biological role, may target protein phosphatase 1 to F-actin cytoskeleton. In Sus scrofa (Pig), this protein is Phostensin (PPP1R18).